The following is a 70-amino-acid chain: Cold shock-like protein CspJ (70 aa).

Residues Gly-7 to Val-67 form the CSD domain.

The protein resides in the cytoplasm. This Salmonella typhi protein is Cold shock-like protein CspJ (cspJ).